A 371-amino-acid polypeptide reads, in one-letter code: Glycosyltransferase 8 domain-containing protein 1 (371 aa).

The Cytoplasmic portion of the chain corresponds to 1-7; that stretch reads MSFRKVH. Residues 8–28 form a helical; Signal-anchor for type II membrane protein membrane-spanning segment; that stretch reads IAIILLAAVVFLLILHHNILG. At 29–371 the chain is on the lumenal side; sequence LTDILTRQSS…RRHGEADGTK (343 aa). 3 N-linked (GlcNAc...) asparagine glycosylation sites follow: Asn104, Asn249, and Asn257.

It belongs to the glycosyltransferase 8 family.

Its subcellular location is the membrane. This chain is Glycosyltransferase 8 domain-containing protein 1 (glt8d1), found in Xenopus tropicalis (Western clawed frog).